Here is a 101-residue protein sequence, read N- to C-terminus: Urease subunit beta (101 aa).

This sequence belongs to the urease beta subunit family. Heterotrimer of UreA (gamma), UreB (beta) and UreC (alpha) subunits. Three heterotrimers associate to form the active enzyme.

It is found in the cytoplasm. The catalysed reaction is urea + 2 H2O + H(+) = hydrogencarbonate + 2 NH4(+). The protein operates within nitrogen metabolism; urea degradation; CO(2) and NH(3) from urea (urease route): step 1/1. This chain is Urease subunit beta, found in Saccharophagus degradans (strain 2-40 / ATCC 43961 / DSM 17024).